The primary structure comprises 150 residues: D-aminoacyl-tRNA deacylase (150 aa).

Positions 136 to 137 match the Gly-cisPro motif, important for rejection of L-amino acids motif; the sequence is GP.

This sequence belongs to the DTD family. As to quaternary structure, homodimer.

The protein resides in the cytoplasm. The enzyme catalyses glycyl-tRNA(Ala) + H2O = tRNA(Ala) + glycine + H(+). It carries out the reaction a D-aminoacyl-tRNA + H2O = a tRNA + a D-alpha-amino acid + H(+). Its function is as follows. An aminoacyl-tRNA editing enzyme that deacylates mischarged D-aminoacyl-tRNAs. Also deacylates mischarged glycyl-tRNA(Ala), protecting cells against glycine mischarging by AlaRS. Acts via tRNA-based rather than protein-based catalysis; rejects L-amino acids rather than detecting D-amino acids in the active site. By recycling D-aminoacyl-tRNA to D-amino acids and free tRNA molecules, this enzyme counteracts the toxicity associated with the formation of D-aminoacyl-tRNA entities in vivo and helps enforce protein L-homochirality. In Macrococcus caseolyticus (strain JCSC5402) (Macrococcoides caseolyticum), this protein is D-aminoacyl-tRNA deacylase.